Reading from the N-terminus, the 217-residue chain is Pyridoxine/pyridoxamine 5'-phosphate oxidase (217 aa).

FMN-binding positions include 66–71 (RMVLLK), 81–82 (FT), R87, K88, and Q110. A substrate-binding site is contributed by K71. The substrate site is built by Y128, R132, and S136. Residues 145–146 (QS) and W190 each bind FMN. A substrate-binding site is contributed by 196 to 198 (RLH). FMN is bound at residue R200.

The protein belongs to the pyridoxamine 5'-phosphate oxidase family. In terms of assembly, homodimer. FMN is required as a cofactor.

It catalyses the reaction pyridoxamine 5'-phosphate + O2 + H2O = pyridoxal 5'-phosphate + H2O2 + NH4(+). The catalysed reaction is pyridoxine 5'-phosphate + O2 = pyridoxal 5'-phosphate + H2O2. The protein operates within cofactor metabolism; pyridoxal 5'-phosphate salvage; pyridoxal 5'-phosphate from pyridoxamine 5'-phosphate: step 1/1. It functions in the pathway cofactor metabolism; pyridoxal 5'-phosphate salvage; pyridoxal 5'-phosphate from pyridoxine 5'-phosphate: step 1/1. In terms of biological role, catalyzes the oxidation of either pyridoxine 5'-phosphate (PNP) or pyridoxamine 5'-phosphate (PMP) into pyridoxal 5'-phosphate (PLP). The sequence is that of Pyridoxine/pyridoxamine 5'-phosphate oxidase from Psychromonas ingrahamii (strain DSM 17664 / CCUG 51855 / 37).